Here is an 83-residue protein sequence, read N- to C-terminus: Phosphoribosylformylglycinamidine synthase subunit PurS (83 aa).

It belongs to the PurS family. As to quaternary structure, homodimer. Part of the FGAM synthase complex composed of 1 PurL, 1 PurQ and 2 PurS subunits.

It is found in the cytoplasm. It catalyses the reaction N(2)-formyl-N(1)-(5-phospho-beta-D-ribosyl)glycinamide + L-glutamine + ATP + H2O = 2-formamido-N(1)-(5-O-phospho-beta-D-ribosyl)acetamidine + L-glutamate + ADP + phosphate + H(+). Its pathway is purine metabolism; IMP biosynthesis via de novo pathway; 5-amino-1-(5-phospho-D-ribosyl)imidazole from N(2)-formyl-N(1)-(5-phospho-D-ribosyl)glycinamide: step 1/2. In terms of biological role, part of the phosphoribosylformylglycinamidine synthase complex involved in the purines biosynthetic pathway. Catalyzes the ATP-dependent conversion of formylglycinamide ribonucleotide (FGAR) and glutamine to yield formylglycinamidine ribonucleotide (FGAM) and glutamate. The FGAM synthase complex is composed of three subunits. PurQ produces an ammonia molecule by converting glutamine to glutamate. PurL transfers the ammonia molecule to FGAR to form FGAM in an ATP-dependent manner. PurS interacts with PurQ and PurL and is thought to assist in the transfer of the ammonia molecule from PurQ to PurL. This Methanocaldococcus jannaschii (strain ATCC 43067 / DSM 2661 / JAL-1 / JCM 10045 / NBRC 100440) (Methanococcus jannaschii) protein is Phosphoribosylformylglycinamidine synthase subunit PurS.